The chain runs to 221 residues: Small ribosomal subunit protein uS3 (221 aa).

One can recognise a KH type-2 domain in the interval 39–108 (IRKFVKKELF…NVLINIVEVK (70 aa)).

Belongs to the universal ribosomal protein uS3 family. Part of the 30S ribosomal subunit. Forms a tight complex with proteins S10 and S14.

Functionally, binds the lower part of the 30S subunit head. Binds mRNA in the 70S ribosome, positioning it for translation. The sequence is that of Small ribosomal subunit protein uS3 from Clostridium beijerinckii (strain ATCC 51743 / NCIMB 8052) (Clostridium acetobutylicum).